The following is a 258-amino-acid chain: UPF0246 protein plu0566 (258 aa).

It belongs to the UPF0246 family.

The sequence is that of UPF0246 protein plu0566 from Photorhabdus laumondii subsp. laumondii (strain DSM 15139 / CIP 105565 / TT01) (Photorhabdus luminescens subsp. laumondii).